A 470-amino-acid chain; its full sequence is Desmin (470 aa).

The segment at 2–108 (SQAYSSSQRV…QEFLTTRTNE (107 aa)) is head. S7 is subject to Phosphoserine; by CDK1. S12 carries the post-translational modification Phosphoserine; by AURKB. An Omega-N-methylarginine modification is found at R16. Phosphothreonine; by AURKB and ROCK1 is present on T17. The residue at position 28 (S28) is a Phosphoserine; by CDK1. Phosphoserine is present on S31. S32 carries the post-translational modification Phosphoserine; by CDK1. An Asymmetric dimethylarginine; alternate modification is found at R37. At R37 the chain carries Omega-N-methylarginine; alternate. S45 carries the phosphoserine modification. Position 58 is an ADP-ribosylarginine (R58). S60 bears the Phosphoserine; by AURKB mark. S68 bears the Phosphoserine mark. R70 bears the Omega-N-methylarginine mark. 2 positions are modified to phosphothreonine; by ROCK1: T76 and T77. S81 bears the Phosphoserine mark. One can recognise an IF rod domain in the interval 108–416 (EKVELQELND…KLLEGEESRI (309 aa)). Residues 109 to 141 (KVELQELNDRFANYIEKVRFLEQQNAALAAEVN) form a coil 1A region. Residues 142 to 151 (RLKGREPTRV) form a linker 1 region. The interval 152–252 (AELYEEELRE…HEEEIRELQA (101 aa)) is coil 1B. The segment at 253–268 (QLQEQQVQVEMDMSKP) is linker 12. Residues 268–415 (PDLTAALRDI…RKLLEGEESR (148 aa)) are interaction with NEB. The segment at 269 to 287 (DLTAALRDIRAQYETIAAK) is coil 2A. The tract at residues 288–295 (NISEAEEW) is linker 2. Phosphoserine occurs at positions 290, 358, 361, and 424. Residues 296–412 (YKSKVSDLTQ…ATYRKLLEGE (117 aa)) are coil 2B. Residues 413–470 (ESRINLPIQTYSALNFRETSPEQRGSEVHTKKTVMIKTIETRDGEVVSEATQQQHEVL) are tail. The segment at 438–453 (SEVHTKKTVMIKTIET) is interaction with CRYAB.

It belongs to the intermediate filament family. As to quaternary structure, homomer. Interacts with DST. Interacts with MTM1. Interacts with EPPK1; interaction is dependent of higher-order structure of intermediate filament. Interacts with CRYAB. Interacts with NEB (via nebulin repeats 160-164). Interacts (via rod region) with NEBL (via nebulin repeats 1-5). Interacts with ASB2 isoform 1; the interaction targets DES for proteasomal degradation. Interacts with PLEC isoform 1C. Interacts with PKP1. Interacts with FLII. Post-translationally, ADP-ribosylation prevents ability to form intermediate filaments. Phosphorylation at Ser-7, Ser-28 and Ser-32 by CDK1, phosphorylation at Ser-60 by AURKB and phosphorylation at Thr-76 by ROCK1 contribute to efficient separation of desmin intermediate filaments during mitosis. In terms of processing, ubiquitination by a SCF-like complex containing ASB2 isoform 1 leads to proteasomal degradation.

It localises to the cytoplasm. It is found in the myofibril. The protein resides in the sarcomere. The protein localises to the z line. Its subcellular location is the cell membrane. It localises to the sarcolemma. It is found in the nucleus. The protein resides in the cell tip. The protein localises to the nucleus envelope. Its function is as follows. Muscle-specific type III intermediate filament essential for proper muscular structure and function. Plays a crucial role in maintaining the structure of sarcomeres, inter-connecting the Z-disks and forming the myofibrils, linking them not only to the sarcolemmal cytoskeleton, but also to the nucleus and mitochondria, thus providing strength for the muscle fiber during activity. In adult striated muscle they form a fibrous network connecting myofibrils to each other and to the plasma membrane from the periphery of the Z-line structures. May act as a sarcomeric microtubule-anchoring protein: specifically associates with detyrosinated tubulin-alpha chains, leading to buckled microtubules and mechanical resistance to contraction. Required for nuclear membrane integrity, via anchoring at the cell tip and nuclear envelope, resulting in maintenance of microtubule-derived intracellular mechanical forces. Contributes to the transcriptional regulation of the NKX2-5 gene in cardiac progenitor cells during a short period of cardiomyogenesis and in cardiac side population stem cells in the adult. Plays a role in maintaining an optimal conformation of nebulette (NEB) on heart muscle sarcomeres to bind and recruit cardiac alpha-actin. The protein is Desmin (DES) of Homo sapiens (Human).